A 407-amino-acid chain; its full sequence is Deacetylase Atu3266 (407 aa).

Residues histidine 75, histidine 77, lysine 173, histidine 206, histidine 229, and aspartate 289 each contribute to the Zn(2+) site. At lysine 173 the chain carries N6-carboxylysine.

This sequence belongs to the metallo-dependent hydrolases superfamily. Atu3266/EF_0837 deacetylase family. As to quaternary structure, homohexamer, dimer of trimers. It depends on Zn(2+) as a cofactor.

Functionally, esterase that catalyzes the deacetylation of acetyl-(R)-mandelate (in vitro). Can also hydrolyze acetyl glycolate, but with lower efficiency. Has very low N-acetyl-D-amino acid deacetylase activity with N-acetyl-D-serine and N-acetyl-D-threonine (in vitro). Theoretical substrate docking studies suggest that other N-acetylated amino acids may optimally occupy the active site and may in fact be the physiological substrates. The chain is Deacetylase Atu3266 from Agrobacterium fabrum (strain C58 / ATCC 33970) (Agrobacterium tumefaciens (strain C58)).